The sequence spans 101 residues: Small ribosomal subunit protein uS14 (101 aa).

Belongs to the universal ribosomal protein uS14 family. As to quaternary structure, part of the 30S ribosomal subunit. Contacts proteins S3 and S10.

Functionally, binds 16S rRNA, required for the assembly of 30S particles and may also be responsible for determining the conformation of the 16S rRNA at the A site. This chain is Small ribosomal subunit protein uS14, found in Methylorubrum extorquens (strain PA1) (Methylobacterium extorquens).